A 689-amino-acid chain; its full sequence is Transcription factor BHLH42 (689 aa).

2 disordered regions span residues 192-287 and 458-489; these read IDHH…NPRV and DDNN…ANHV. Over residues 206-217 the composition is skewed to polar residues; it reads EHSTSNLATSSV. The segment covering 246-271 has biased composition (acidic residues); sequence EEQEQEQEEDEDDDDDDDDEEEAESD. The interval 483–496 is basic motif; sequence ELSANHVLAERRRR. The bHLH domain occupies 483–532; it reads ELSANHVLAERRRREKLNERFIILRSLVPFVTKMDKASILGDTIEYVKQL. The tract at residues 497 to 532 is helix-loop-helix motif; the sequence is EKLNERFIILRSLVPFVTKMDKASILGDTIEYVKQL. The tract at residues 547–570 is disordered; that stretch reads EIDQRSRSSGDPQRSGAKAATDKR.

The protein belongs to the bHLH protein family. As to quaternary structure, interacts with MYB123. Expressed in the inner pericarp of maturing fruits.

Its subcellular location is the nucleus. Its function is as follows. Transcription activator involved in the spatiotemporal regulation of anthocyanin biosynthesis specifically in the inner pericarp of red-fleshed kiwifruits. Functions in association with MYB123 to activate the promoters of LDOX (ANS) and F3GT1 that encode the dedicated enzymes for anthocyanin biosynthesis. This Actinidia chinensis var. chinensis (Chinese soft-hair kiwi) protein is Transcription factor BHLH42.